The following is a 518-amino-acid chain: Sensor protein kinase HptS (518 aa).

The next 2 membrane-spanning stretches (helical) occupy residues 20 to 40 and 222 to 242; these read IFPV…IYIW and GITL…FGFI. Residues 297-513 enclose the Histidine kinase domain; that stretch reads EQLIHSIEHT…LICYKIPLSR (217 aa). Residue His-325 is modified to Phosphohistidine; by autocatalysis.

In terms of processing, autophosphorylated.

Its subcellular location is the cell membrane. The catalysed reaction is ATP + protein L-histidine = ADP + protein N-phospho-L-histidine.. Its function is as follows. Member of the two-component regulatory system HptS/HptR that regulates genes involved in hexose phosphate transport system in response to changes in extracellular phosphate sources. May act as a sensor protein kinase which is autophosphorylated at a histidine residue and transfers its phosphate group to the conserved aspartic acid residue in the regulatory domain of HptS. In turn, HptS antagonizes CcpA-dependent transcription of a subset of CcpA-regulated genes involved in antibiotic susceptibility. This is Sensor protein kinase HptS (hptS) from Staphylococcus aureus (strain bovine RF122 / ET3-1).